Consider the following 264-residue polypeptide: Probable BRI1 kinase inhibitor 1 (264 aa).

Disordered regions lie at residues 1-146 (MTMN…GLDV) and 165-240 (FSRH…SEES). Pro residues predominate over residues 9-30 (RSQPPPPHPPLFKPTTPPPPPL). The segment covering 31 to 40 (LSTSTSTSPP) has biased composition (low complexity). Residues 77-97 (LSHNNYSSKANQHRQTGSSSS) are compositionally biased toward polar residues. Residues 98–107 (SKEKDREYKA) show a composition bias toward basic and acidic residues. Composition is skewed to low complexity over residues 208-219 (LSSAPASLRASP) and 227-239 (VGGS…SSEE).

As to quaternary structure, interacts with BRI1. Phosphorylated by BRI1.

In terms of biological role, negative regulator of brassinosteroid signaling. The sequence is that of Probable BRI1 kinase inhibitor 1 (BKI1) from Oryza sativa subsp. japonica (Rice).